The primary structure comprises 316 residues: uncharacterized protein (316 aa).

It belongs to the chlamydial CPn_0441/CT_007/TC_0275 family.

This is an uncharacterized protein from Chlamydia pneumoniae (Chlamydophila pneumoniae).